A 38-amino-acid chain; its full sequence is Potassium channel toxin alpha-KTx 3.12 (38 aa).

Intrachain disulfides connect cysteine 8–cysteine 28, cysteine 14–cysteine 33, and cysteine 18–cysteine 35. Position 38 is a lysine amide (lysine 38).

The protein belongs to the short scorpion toxin superfamily. Potassium channel inhibitor family. Alpha-KTx 03 subfamily. In terms of tissue distribution, expressed by the venom gland.

The protein localises to the secreted. Functionally, potent inhibitor of voltage-dependent potassium channels, with a preference for Kv1.3/KCNA3 versus Kv1.2/KCNA2. The protein is Potassium channel toxin alpha-KTx 3.12 of Androctonus amoreuxi (African fattail scorpion).